The following is a 110-amino-acid chain: UPF0367 protein sync_2587 (110 aa).

The protein belongs to the UPF0367 family.

The protein is UPF0367 protein sync_2587 of Synechococcus sp. (strain CC9311).